The chain runs to 81 residues: Accessory gland protein Acp63F (81 aa).

A signal peptide spans 1 to 16 (MKAIIVFILFISSVHA).

In terms of tissue distribution, main cells of accessory gland and seminal fluid.

The protein localises to the secreted. Functionally, responsible for physiological and behavioral changes in mated female flies. This Drosophila melanogaster (Fruit fly) protein is Accessory gland protein Acp63F (Acp63F).